Consider the following 201-residue polypeptide: Lipoprotein signal peptidase (201 aa).

Helical transmembrane passes span Ser-73 to Ile-93 and Thr-97 to Asp-117. Residues Asp-126 and Asp-144 contribute to the active site. The helical transmembrane segment at Tyr-135–Ile-155 threads the bilayer.

This sequence belongs to the peptidase A8 family.

It is found in the cell inner membrane. The enzyme catalyses Release of signal peptides from bacterial membrane prolipoproteins. Hydrolyzes -Xaa-Yaa-Zaa-|-(S,diacylglyceryl)Cys-, in which Xaa is hydrophobic (preferably Leu), and Yaa (Ala or Ser) and Zaa (Gly or Ala) have small, neutral side chains.. The protein operates within protein modification; lipoprotein biosynthesis (signal peptide cleavage). Its function is as follows. This protein specifically catalyzes the removal of signal peptides from prolipoproteins. The sequence is that of Lipoprotein signal peptidase from Rickettsia conorii (strain ATCC VR-613 / Malish 7).